A 106-amino-acid polypeptide reads, in one-letter code: MNDSEFHRLADQLWLTIEEHLDDWDGDSDIDCEINGGVLTITFENGSKIIINRQEPLHQVWLATKQGGYHFDLKGDEWICDRSGETFWDLLEQAATQQAGETVSFR.

The protein belongs to the frataxin family.

In terms of biological role, involved in iron-sulfur (Fe-S) cluster assembly. May act as a regulator of Fe-S biogenesis. The sequence is that of Iron-sulfur cluster assembly protein CyaY from Escherichia coli O127:H6 (strain E2348/69 / EPEC).